The primary structure comprises 849 residues: Mechanosensitive ion channel protein 7 (849 aa).

The interval 1–49 is disordered; that stretch reads MEFRKPFKSHSSYKQIISTGDQNEKTKKKKKLANLDDGDIAKTQSSGSS. Residues 9-21 show a composition bias toward polar residues; it reads SHSSYKQIISTGD. A run of 6 helical transmembrane segments spans residues 231–251, 274–294, 313–333, 344–364, 606–626, and 642–662; these read AITLLQWMSLIALVVALVLSL, LVLICGRLVSGCGIRIIVFFI, TAVQNCLWLGLVLLAWHFLFD, VLLLMSKILVCFLLSTVLWLI, MISFLTAIVIIVIWLILLEIA, and AFMFGNSLKTVFESIIFLFII.

This sequence belongs to the MscS (TC 1.A.23) family.

Its subcellular location is the membrane. Mechanosensitive channel that opens in response to stretch forces in the membrane lipid bilayer. The chain is Mechanosensitive ion channel protein 7 (MSL7) from Arabidopsis thaliana (Mouse-ear cress).